We begin with the raw amino-acid sequence, 185 residues long: UPF0200 protein TK1334 (185 aa).

7–14 contacts ATP; that stretch reads GMPGSGKS.

Belongs to the UPF0200 family.

This chain is UPF0200 protein TK1334, found in Thermococcus kodakarensis (strain ATCC BAA-918 / JCM 12380 / KOD1) (Pyrococcus kodakaraensis (strain KOD1)).